We begin with the raw amino-acid sequence, 162 residues long: Allophycocyanin beta chain (162 aa).

N4-methylasparagine is present on asparagine 72. Residue cysteine 82 participates in (2R,3E)-phycocyanobilin binding.

Belongs to the phycobiliprotein family. In terms of assembly, heterodimer of an alpha and a beta chain. Post-translationally, contains one covalently linked phycocyanobilin chromophore.

The protein resides in the cellular thylakoid membrane. Light-harvesting photosynthetic bile pigment-protein from the phycobiliprotein complex. Allophycocyanin has a maximum absorption at approximately 650 nanometers. The sequence is that of Allophycocyanin beta chain from Microchaete diplosiphon (Fremyella diplosiphon).